The sequence spans 691 residues: MARDYKIEDYRNFGIMAHIDAGKTTTTERILYYTGKSHKIGEVHDGAATMDWMEQEQERGITITSAATTCFWNGKRLNIIDTPGHVDFTIEVERSLRVLDGAVCCLDANAGVEPQTETVWRQADRYKVPRMVFINKMDKLGADFFNCVKMIEDRLGATPLCVQLPIGSETEFEGVIDLIKMKELVWKGEGLGAEWEERDIRADLADKAAEYREALVETAVEQDEAAMEAYLEGEEPSEELLKSLIRKGCIALAFNPILCGTAFKNKGVQPLLDAVVDFLPNPTEVPAIKGIDFKTEEEVVRRASDDEPTSLLAFKIMNDPFVGSLTFARMYSGHLETGISLLNTVKDKKERIGRMLLMHSNSREDIKECFAGDIVAIAGLKDTTTGDTLCDPMKPVILERMEFPDPVIELAIEPKSKADQEKLGVALQRLAAEDPSFRMKTDEESGQTIIAGMGELHLDILVDRMKREFKVEANVGAPQVAYRESLSQKGLVDYTHKKQSGGSGQFARVKIEFGPGEPGSGFVFESKIVGGNVPKEYIPGVEKGLKSVMDGGLIAGFPVIDVHAMLVDGAYHDVDSSVLAFEIAARAAFREAKSHCAPKLLEPIMKVEVVTPDEYTGGVIGDLNSRRGQIAGQEMRGNATVVNAMVPLANMFGYVNNLRSATQGRAQFTMLFDHYEAVPKAVEQEVIAKSA.

Residues 8–283 enclose the tr-type G domain; that stretch reads EDYRNFGIMA…AVVDFLPNPT (276 aa). Residues 17-24, 81-85, and 135-138 each bind GTP; these read AHIDAGKT, DTPGH, and NKMD.

This sequence belongs to the TRAFAC class translation factor GTPase superfamily. Classic translation factor GTPase family. EF-G/EF-2 subfamily.

The protein localises to the cytoplasm. Functionally, catalyzes the GTP-dependent ribosomal translocation step during translation elongation. During this step, the ribosome changes from the pre-translocational (PRE) to the post-translocational (POST) state as the newly formed A-site-bound peptidyl-tRNA and P-site-bound deacylated tRNA move to the P and E sites, respectively. Catalyzes the coordinated movement of the two tRNA molecules, the mRNA and conformational changes in the ribosome. This is Elongation factor G from Maricaulis maris (strain MCS10) (Caulobacter maris).